Consider the following 125-residue polypeptide: Bublin coiled-coil protein (125 aa).

A coiled-coil region spans residues 46 to 95; it reads IRKLDTQLDHLNDYMSKMEERLKAHNDRMMETLKQQKEEREKRRRSFHER. The tract at residues 79–125 is disordered; the sequence is KQQKEEREKRRRSFHERMSQNQSEDEEFKKQMSSILKRVQSVKRTEK.

As to expression, expressed in many epithelial tissues, including the pharynx, intestine, excretory canal and hypodermis.

Its subcellular location is the cell junction. The protein resides in the cytoplasm. It is found in the cytoskeleton. In terms of biological role, dynamic component of the endotube in intestinal cells, interacts with intermediate filament and regulates intestinal lumen morphology. This is Bublin coiled-coil protein from Caenorhabditis elegans.